Reading from the N-terminus, the 515-residue chain is Aldehyde dehydrogenase (515 aa).

The segment covering 1 to 12 (MTVAEQQPQHQG) has biased composition (polar residues). The interval 1-20 (MTVAEQQPQHQGYANPGTPG) is disordered. NAD(+) is bound at residue 228–234 (GFGLEAG). Catalysis depends on residues E272 and C311.

It belongs to the aldehyde dehydrogenase family.

The enzyme catalyses an aldehyde + NAD(+) + H2O = a carboxylate + NADH + 2 H(+). This chain is Aldehyde dehydrogenase (aldA), found in Deinococcus radiodurans (strain ATCC 13939 / DSM 20539 / JCM 16871 / CCUG 27074 / LMG 4051 / NBRC 15346 / NCIMB 9279 / VKM B-1422 / R1).